The following is a 390-amino-acid chain: L-seryl-tRNA(Sec) selenium transferase (390 aa).

K225 carries the post-translational modification N6-(pyridoxal phosphate)lysine.

The protein belongs to the SelA family. Requires pyridoxal 5'-phosphate as cofactor.

The protein localises to the cytoplasm. It catalyses the reaction L-seryl-tRNA(Sec) + selenophosphate + H(+) = L-selenocysteinyl-tRNA(Sec) + phosphate. It functions in the pathway aminoacyl-tRNA biosynthesis; selenocysteinyl-tRNA(Sec) biosynthesis; selenocysteinyl-tRNA(Sec) from L-seryl-tRNA(Sec) (bacterial route): step 1/1. Its function is as follows. Converts seryl-tRNA(Sec) to selenocysteinyl-tRNA(Sec) required for selenoprotein biosynthesis. This chain is L-seryl-tRNA(Sec) selenium transferase, found in Helicobacter pylori (strain P12).